The following is a 198-amino-acid chain: Nucleoside triphosphate pyrophosphatase (198 aa).

Asp72 functions as the Proton acceptor in the catalytic mechanism.

It belongs to the Maf family. A divalent metal cation is required as a cofactor.

The protein localises to the cytoplasm. It carries out the reaction a ribonucleoside 5'-triphosphate + H2O = a ribonucleoside 5'-phosphate + diphosphate + H(+). The enzyme catalyses a 2'-deoxyribonucleoside 5'-triphosphate + H2O = a 2'-deoxyribonucleoside 5'-phosphate + diphosphate + H(+). In terms of biological role, nucleoside triphosphate pyrophosphatase. May have a dual role in cell division arrest and in preventing the incorporation of modified nucleotides into cellular nucleic acids. In Corynebacterium aurimucosum (strain ATCC 700975 / DSM 44827 / CIP 107346 / CN-1) (Corynebacterium nigricans), this protein is Nucleoside triphosphate pyrophosphatase.